The primary structure comprises 334 residues: Zinc finger Ran-binding domain-containing protein 2 (334 aa).

2 RanBP2-type zinc fingers span residues 9-40 (SDGDWICPDKKCGNVNFARRTSCNRCGREKTT) and 65-94 (SANDWQCKTCGNVNWARRSECNMCNTPKYA). The disordered stretch occupies residues 117-334 (REESDGEYDE…SGSRTSSKKK (218 aa)). A compositionally biased stretch (acidic residues) spans 150 to 163 (DKESEGEDEEDEDG). Basic residues predominate over residues 196 to 212 (KKKKSNRRSRSKSRSSH). 2 stretches are compositionally biased toward low complexity: residues 213-224 (SRSSSRSSSHSS) and 258-285 (SRSSSRSYRGSSTPRKRSYSSSRSSSSP). Basic residues predominate over residues 302 to 318 (RKKRRSRSRSPERRRRS). Low complexity predominate over residues 319-334 (SSGSSHSGSRTSSKKK).

This sequence belongs to the ZRANB2 family.

The protein localises to the nucleus. Functionally, may regulate alternative splicing by interfering with constitutive 5'-splice site selection. The protein is Zinc finger Ran-binding domain-containing protein 2 of Gallus gallus (Chicken).